The primary structure comprises 307 residues: Coenzyme PQQ synthesis protein B (307 aa).

The protein belongs to the PqqB family.

Its pathway is cofactor biosynthesis; pyrroloquinoline quinone biosynthesis. May be involved in the transport of PQQ or its precursor to the periplasm. In Gluconacetobacter diazotrophicus (strain ATCC 49037 / DSM 5601 / CCUG 37298 / CIP 103539 / LMG 7603 / PAl5), this protein is Coenzyme PQQ synthesis protein B.